The following is a 595-amino-acid chain: Metacaspase-1 (595 aa).

Catalysis depends on residues His411 and Cys466.

It belongs to the peptidase C14B family. In terms of assembly, monomer.

Its activity is regulated as follows. Activated by Ca(2+). Its function is as follows. Cysteine protease that cleaves specifically after arginine or lysine residues. The sequence is that of Metacaspase-1 from Plasmodium berghei (strain Anka).